A 333-amino-acid polypeptide reads, in one-letter code: Fructose-1,6-bisphosphatase class 1 1 (333 aa).

4 residues coordinate Mg(2+): Glu81, Asp100, Leu102, and Asp103. Residues 103–106 and Asn191 each bind substrate; that span reads DGSS. Glu263 serves as a coordination point for Mg(2+).

The protein belongs to the FBPase class 1 family. Homotetramer. Requires Mg(2+) as cofactor.

It localises to the cytoplasm. It carries out the reaction beta-D-fructose 1,6-bisphosphate + H2O = beta-D-fructose 6-phosphate + phosphate. It functions in the pathway carbohydrate biosynthesis; Calvin cycle. In Cereibacter sphaeroides (strain ATCC 17023 / DSM 158 / JCM 6121 / CCUG 31486 / LMG 2827 / NBRC 12203 / NCIMB 8253 / ATH 2.4.1.) (Rhodobacter sphaeroides), this protein is Fructose-1,6-bisphosphatase class 1 1.